The primary structure comprises 473 residues: Photosystem II CP43 reaction center protein (473 aa).

The propeptide occupies 1–14 (MKTLYSLRRFSHVE). The residue at position 15 (Thr15) is an N-acetylthreonine. Phosphothreonine is present on Thr15. 5 consecutive transmembrane segments (helical) span residues 69 to 93 (LFEV…PHLA), 134 to 155 (LLGP…KDRN), 178 to 200 (KALY…RKIT), 255 to 275 (KPFA…LSYS), and 291 to 312 (WFNN…ASQA). Glu367 serves as a coordination point for [CaMn4O5] cluster. Residues 447-471 (RARAAAAGFEKGIDRDFEPVLSMTP) form a helical membrane-spanning segment.

Belongs to the PsbB/PsbC family. PsbC subfamily. In terms of assembly, PSII is composed of 1 copy each of membrane proteins PsbA, PsbB, PsbC, PsbD, PsbE, PsbF, PsbH, PsbI, PsbJ, PsbK, PsbL, PsbM, PsbT, PsbX, PsbY, PsbZ, Psb30/Ycf12, at least 3 peripheral proteins of the oxygen-evolving complex and a large number of cofactors. It forms dimeric complexes. Binds multiple chlorophylls and provides some of the ligands for the Ca-4Mn-5O cluster of the oxygen-evolving complex. It may also provide a ligand for a Cl- that is required for oxygen evolution. PSII binds additional chlorophylls, carotenoids and specific lipids. is required as a cofactor.

It localises to the plastid membrane. Functionally, one of the components of the core complex of photosystem II (PSII). It binds chlorophyll and helps catalyze the primary light-induced photochemical processes of PSII. PSII is a light-driven water:plastoquinone oxidoreductase, using light energy to abstract electrons from H(2)O, generating O(2) and a proton gradient subsequently used for ATP formation. In Cuscuta obtusiflora (Peruvian dodder), this protein is Photosystem II CP43 reaction center protein.